The chain runs to 192 residues: Thymidylate kinase (192 aa).

7–14 (GIDCVGKS) is a binding site for ATP.

Belongs to the thymidylate kinase family.

It catalyses the reaction dTMP + ATP = dTDP + ADP. Functionally, phosphorylation of dTMP to form dTDP in both de novo and salvage pathways of dTTP synthesis. The polypeptide is Thymidylate kinase (Campylobacter jejuni subsp. jejuni serotype O:23/36 (strain 81-176)).